A 123-amino-acid polypeptide reads, in one-letter code: MSAPSLVQAVAKRGWLNKMLKPVSNWYINAAGYRQMGLRADDLISEENETVLAALQRLSPKESYDRIYRIRRATQLSLTHKLLPKNEWTTQEEDVPYLRPLIDQIEAEAAEKDALDTLAVVKN.

This sequence belongs to the UQCRB/QCR7 family. Component of the ubiquinol-cytochrome c oxidoreductase (cytochrome b-c1 complex, complex III, CIII), a multisubunit enzyme composed of 10 subunits. The complex is composed of 3 respiratory subunits cytochrome b (cob), cytochrome c1 (cyt-1) and Rieske protein (fes-1), 2 core protein subunits pep and ucr-1, and 5 low-molecular weight protein subunits qcr6, qcr7, qcr8, qcr9 and probably NCU16844/qcr10. The complex exists as an obligatory dimer and forms supercomplexes (SCs) in the inner mitochondrial membrane with NADH-ubiquinone oxidoreductase (complex I, CI) and cytochrome c oxidase (complex IV, CIV), resulting in different assemblies (supercomplexes SCI(1)III(2), SCIII(2)IV(1) and SCIII(2)IV(2) as well as higher order I(x)III(y)IV(z) megacomplexes).

The protein resides in the mitochondrion inner membrane. Its function is as follows. Component of the ubiquinol-cytochrome c oxidoreductase, a multisubunit transmembrane complex that is part of the mitochondrial electron transport chain which drives oxidative phosphorylation. The respiratory chain contains 3 multisubunit complexes succinate dehydrogenase (complex II, CII), ubiquinol-cytochrome c oxidoreductase (cytochrome b-c1 complex, complex III, CIII) and cytochrome c oxidase (complex IV, CIV), that cooperate to transfer electrons derived from NADH and succinate to molecular oxygen, creating an electrochemical gradient over the inner membrane that drives transmembrane transport and the ATP synthase. The cytochrome b-c1 complex catalyzes electron transfer from ubiquinol to cytochrome c, linking this redox reaction to translocation of protons across the mitochondrial inner membrane, with protons being carried across the membrane as hydrogens on the quinol. In the process called Q cycle, 2 protons are consumed from the matrix, 4 protons are released into the intermembrane space and 2 electrons are passed to cytochrome c. The polypeptide is Cytochrome b-c1 complex subunit 7 (qcr7) (Neurospora crassa (strain ATCC 24698 / 74-OR23-1A / CBS 708.71 / DSM 1257 / FGSC 987)).